An 86-amino-acid polypeptide reads, in one-letter code: uncharacterized protein (86 aa).

This is an uncharacterized protein from Acidianus bottle-shaped virus (isolate Italy/Pozzuoli) (ABV).